The following is a 140-amino-acid chain: 6,7-dimethyl-8-ribityllumazine synthase (140 aa).

5-amino-6-(D-ribitylamino)uracil-binding positions include Phe11, 43-45 (SFD), and 67-69 (CVI). Residue 72-73 (DT) participates in (2S)-2-hydroxy-3-oxobutyl phosphate binding. The active-site Proton donor is the His75. Leu100 contributes to the 5-amino-6-(D-ribitylamino)uracil binding site. Arg115 contributes to the (2S)-2-hydroxy-3-oxobutyl phosphate binding site.

The protein belongs to the DMRL synthase family. Forms an icosahedral capsid composed of 60 subunits, arranged as a dodecamer of pentamers.

The catalysed reaction is (2S)-2-hydroxy-3-oxobutyl phosphate + 5-amino-6-(D-ribitylamino)uracil = 6,7-dimethyl-8-(1-D-ribityl)lumazine + phosphate + 2 H2O + H(+). Its pathway is cofactor biosynthesis; riboflavin biosynthesis; riboflavin from 2-hydroxy-3-oxobutyl phosphate and 5-amino-6-(D-ribitylamino)uracil: step 1/2. Functionally, catalyzes the formation of 6,7-dimethyl-8-ribityllumazine by condensation of 5-amino-6-(D-ribitylamino)uracil with 3,4-dihydroxy-2-butanone 4-phosphate. This is the penultimate step in the biosynthesis of riboflavin. This is 6,7-dimethyl-8-ribityllumazine synthase from Methanococcus vannielii (strain ATCC 35089 / DSM 1224 / JCM 13029 / OCM 148 / SB).